The sequence spans 249 residues: 2,3-bisphosphoglycerate-dependent phosphoglycerate mutase (249 aa).

Residues 8–15 (RHGESIWN), 21–22 (TG), arginine 60, 87–90 (ERHY), lysine 98, 114–115 (RR), and 183–184 (GN) each bind substrate. Histidine 9 (tele-phosphohistidine intermediate) is an active-site residue. Glutamate 87 functions as the Proton donor/acceptor in the catalytic mechanism.

It belongs to the phosphoglycerate mutase family. BPG-dependent PGAM subfamily.

It carries out the reaction (2R)-2-phosphoglycerate = (2R)-3-phosphoglycerate. The protein operates within carbohydrate degradation; glycolysis; pyruvate from D-glyceraldehyde 3-phosphate: step 3/5. Functionally, catalyzes the interconversion of 2-phosphoglycerate and 3-phosphoglycerate. This Caldanaerobacter subterraneus subsp. tengcongensis (strain DSM 15242 / JCM 11007 / NBRC 100824 / MB4) (Thermoanaerobacter tengcongensis) protein is 2,3-bisphosphoglycerate-dependent phosphoglycerate mutase.